The chain runs to 772 residues: Elongin-A (772 aa).

A TFIIS N-terminal domain is found at 4-79; it reads ESALQVVEKL…AQWKKLVPVE (76 aa). Basic and acidic residues-rich tracts occupy residues 79–105 and 136–156; these read ERNA…LQKE and LSEL…DERK. Disordered regions lie at residues 79 to 403 and 418 to 466; these read ERNA…FEQP and KKKK…EKPA. Serine 196 is modified (phosphoserine). Composition is skewed to basic and acidic residues over residues 226 to 235, 253 to 269, 275 to 308, 321 to 343, and 372 to 384; these read QERHLGEPHG, RPVD…VSRE, LSKE…EGSS, SDNH…KSKQ, and PEGK…DRKS. Phosphoserine occurs at positions 384 and 387. At threonine 394 the chain carries Phosphothreonine. Position 434 is an N6-acetyllysine (lysine 434). Over residues 434 to 443 the composition is skewed to basic and acidic residues; the sequence is KGLKKNDSKS. A Phosphoserine modification is found at serine 516. The activation domain stretch occupies residues 522 to 681; that stretch reads EAGFTGRRMN…PPRDVRRRQE (160 aa). Residues 550 to 559 form a BC-box region; the sequence is TLHQQCIRVL. One can recognise an F-box domain in the interval 566–610; the sequence is IFEVGGVPYSVLEPVLERCTPDQLYRIEEYNHVLIEETDQLWKVH. A disordered region spans residues 674–732; the sequence is RDVRRRQEKFGTGGAAVPEKIKIKPAPYPMGSSHASASSISFNPSPEEPAYDGPSTSSA. Low complexity predominate over residues 705 to 714; the sequence is SSHASASSIS.

As to quaternary structure, heterotrimer of an A (ELOA, ELOA2 or ELOA3P), ELOB and ELOC subunit. Part of a multisubunit ubiquitin ligase complex consisting of elongin BC complex (ELOB and ELOC), elongin A/ELOA, RBX1 and CUL5. Interacts with ERCC6; the interaction is induced by DNA damaging agents or inhibitors of RNA polymerase II elongation. Interacts (via BC-box) with CUL5.

The protein resides in the nucleus. SIII, also known as elongin, is a general transcription elongation factor that increases the RNA polymerase II transcription elongation past template-encoded arresting sites. Subunit A is transcriptionally active and its transcription activity is strongly enhanced by binding to the dimeric complex of the SIII regulatory subunits B and C (elongin BC complex). In terms of biological role, as part of a multisubunit complex composed of elongin BC complex (ELOB and ELOC), elongin A/ELOA, RBX1 and CUL5; polyubiquitinates monoubiquitinated POLR2A. The chain is Elongin-A from Homo sapiens (Human).